A 305-amino-acid chain; its full sequence is Ribonuclease BN (305 aa).

His-63, His-65, Asp-67, His-68, His-141, Asp-212, and His-270 together coordinate Zn(2+). The active-site Proton acceptor is Asp-67.

This sequence belongs to the RNase Z family. RNase BN subfamily. Homodimer. The cofactor is Zn(2+).

Zinc phosphodiesterase, which has both exoribonuclease and endoribonuclease activities. This Proteus mirabilis (strain HI4320) protein is Ribonuclease BN.